A 149-amino-acid polypeptide reads, in one-letter code: Endoribonuclease YbeY (149 aa).

The Zn(2+) site is built by H116, H120, and H126.

Belongs to the endoribonuclease YbeY family. The cofactor is Zn(2+).

The protein localises to the cytoplasm. Single strand-specific metallo-endoribonuclease involved in late-stage 70S ribosome quality control and in maturation of the 3' terminus of the 16S rRNA. This Nocardioides sp. (strain ATCC BAA-499 / JS614) protein is Endoribonuclease YbeY.